The sequence spans 276 residues: NAD-capped RNA hydrolase NudC (276 aa).

Arg-82 contributes to the substrate binding site. The Zn(2+) site is built by Cys-112 and Cys-115. Glu-125 provides a ligand contact to substrate. Positions 130 and 133 each coordinate Zn(2+). Tyr-138 contributes to the substrate binding site. The region spanning 139–262 (PRISPSMIVL…SIARYLIDLY (124 aa)) is the Nudix hydrolase domain. A divalent metal cation-binding residues include Ala-172, Glu-188, and Glu-192. The Nudix box signature appears at 173–194 (GFAEPGESAEDCLVREVREEVA). 206–213 (QCWPFPHS) is a binding site for substrate. Glu-233 is a binding site for a divalent metal cation. Residue Ala-255 coordinates substrate.

Belongs to the Nudix hydrolase family. NudC subfamily. In terms of assembly, homodimer. Mg(2+) is required as a cofactor. The cofactor is Mn(2+). Zn(2+) serves as cofactor.

The enzyme catalyses a 5'-end NAD(+)-phospho-ribonucleoside in mRNA + H2O = a 5'-end phospho-adenosine-phospho-ribonucleoside in mRNA + beta-nicotinamide D-ribonucleotide + 2 H(+). It carries out the reaction NAD(+) + H2O = beta-nicotinamide D-ribonucleotide + AMP + 2 H(+). It catalyses the reaction NADH + H2O = reduced beta-nicotinamide D-ribonucleotide + AMP + 2 H(+). In terms of biological role, mRNA decapping enzyme that specifically removes the nicotinamide adenine dinucleotide (NAD) cap from a subset of mRNAs by hydrolyzing the diphosphate linkage to produce nicotinamide mononucleotide (NMN) and 5' monophosphate mRNA. The NAD-cap is present at the 5'-end of some mRNAs and stabilizes RNA against 5'-processing. Has preference for mRNAs with a 5'-end purine. Catalyzes the hydrolysis of a broad range of dinucleotide pyrophosphates. This is NAD-capped RNA hydrolase NudC from Pseudomonas putida (strain GB-1).